We begin with the raw amino-acid sequence, 141 residues long: Large ribosomal subunit protein uL11 (141 aa).

It belongs to the universal ribosomal protein uL11 family. Part of the ribosomal stalk of the 50S ribosomal subunit. Interacts with L10 and the large rRNA to form the base of the stalk. L10 forms an elongated spine to which L12 dimers bind in a sequential fashion forming a multimeric L10(L12)X complex. One or more lysine residues are methylated.

Functionally, forms part of the ribosomal stalk which helps the ribosome interact with GTP-bound translation factors. The sequence is that of Large ribosomal subunit protein uL11 from Synechococcus sp. (strain WH7803).